The chain runs to 127 residues: Putative membrane protein insertion efficiency factor (127 aa).

The tract at residues 71–106 (DPPPPPRLHRAAAARMPRQRDADPRDTTRCSSTGAE) is disordered. A compositionally biased stretch (basic and acidic residues) spans 88-98 (RQRDADPRDTT).

It belongs to the UPF0161 family.

The protein resides in the cell inner membrane. Its function is as follows. Could be involved in insertion of integral membrane proteins into the membrane. This is Putative membrane protein insertion efficiency factor from Sorangium cellulosum (strain So ce56) (Polyangium cellulosum (strain So ce56)).